We begin with the raw amino-acid sequence, 132 residues long: Vesicle transport protein GOT1A (132 aa).

Residues 1 to 9 (MISITEWQK) are Cytoplasmic-facing. Residues 10–30 (IGVGITGFGIFFILFGTLLYF) traverse the membrane as a helical segment. Residue Asp-31 is a topological domain, lumenal. Residues 32 to 52 (SVLLAFGNLLFLTGLSLIIGL) traverse the membrane as a helical segment. The Cytoplasmic segment spans residues 53 to 68 (RKTFWFFFQRHKLKGT). Residues 69 to 89 (SFLLGGVVIVLLRWPLLGMFL) traverse the membrane as a helical segment. Topologically, residues 90 to 100 (ETYGFFSLFKG) are lumenal. Residues 101–121 (FFPVAFGFLGNVCNIPFLGAL) form a helical membrane-spanning segment. Over 122-132 (FRRLQGTSSMV) the chain is Cytoplasmic.

Belongs to the GOT1 family.

It is found in the golgi apparatus membrane. Functionally, may be involved in fusion of ER-derived transport vesicles with the Golgi complex. This chain is Vesicle transport protein GOT1A, found in Homo sapiens (Human).